Reading from the N-terminus, the 121-residue chain is Basic phospholipase A2 homolog BaTX (121 aa).

Intrachain disulfides connect C26–C115, C28–C44, C43–C95, C49–C121, C50–C88, C57–C81, and C75–C86. The interval 105 to 117 (KKYRYYLKPLCKK) is important for membrane-damaging activities in eukaryotes and bacteria; heparin-binding.

The protein belongs to the phospholipase A2 family. Group II subfamily. K49 sub-subfamily. As to quaternary structure, homodimer; non-covalently linked. In terms of tissue distribution, expressed by the venom gland.

The protein resides in the secreted. Snake venom phospholipase A2 homolog that lacks enzymatic activity. Is myotoxic and displays edema-inducing activities. In vitro, produced time-dependent, irreversible neuromuscular blockade in isolated mouse phrenic nerve-diaphragm and chick biventer cervicis preparations. A model of myotoxic mechanism has been proposed: an apo Lys49-PLA2 is activated by the entrance of a hydrophobic molecule (e.g. fatty acid) at the hydrophobic channel of the protein leading to a reorientation of a monomer. This reorientation causes a transition between 'inactive' to 'active' states, causing alignment of C-terminal and membrane-docking sites (MDoS) side-by-side and putting the membrane-disruption sites (MDiS) in the same plane, exposed to solvent and in a symmetric position for both monomers. The MDoS region stabilizes the toxin on membrane by the interaction of charged residues with phospholipid head groups. Subsequently, the MDiS region destabilizes the membrane with penetration of hydrophobic residues. This insertion causes a disorganization of the membrane, allowing an uncontrolled influx of ions (i.e. calcium and sodium), and eventually triggering irreversible intracellular alterations and cell death. The sequence is that of Basic phospholipase A2 homolog BaTX from Bothrops alternatus (Urutu).